A 361-amino-acid polypeptide reads, in one-letter code: P2Y purinoceptor 4 (361 aa).

Residues 1 to 30 (MTSADSLLFTSLGPSPSSGDGDCKFNEEFK) are Extracellular-facing. Residues 31–58 (FILLPLSYAVVFVLGLALNAPTLWLFLF) traverse the membrane as a helical segment. Over 59–68 (RLRPWDATAT) the chain is Cytoplasmic. A helical membrane pass occupies residues 69 to 91 (YMFHLALSDTLYVLSLPTLVYYY). Topologically, residues 92–108 (AARNHWPFGTGFCKFVR) are extracellular. Cysteines 104 and 181 form a disulfide. The helical transmembrane segment at 109–127 (FLFYWNLYCSVLFLTCISV) threads the bilayer. The Cytoplasmic portion of the chain corresponds to 128–149 (HRYMGICHPLRAIRWGRPRFAG). The helical transmembrane segment at 150-170 (LLCLGVWLVVAGCLVPNLFFV) threads the bilayer. The Extracellular segment spans residues 171 to 192 (TTNANGTTILCHDTTLPEEFDH). N-linked (GlcNAc...) asparagine glycosylation occurs at asparagine 175. The helical transmembrane segment at 193 to 218 (YVYFSSTIMVLLFGFPFLITLVCYGL) threads the bilayer. Topologically, residues 219-242 (MARRLYRPLPGAGQSSSRLRSLRT) are cytoplasmic. A helical transmembrane segment spans residues 243–265 (IAVVLTVFAVCFVPFHITRTIYY). Over 266-283 (LARLLNAECRVLNIVNVV) the chain is Extracellular. The helical transmembrane segment at 284–305 (YKVTRPLASANSCLDPVLYLFT) threads the bilayer. Over 306 to 361 (GDKYRNQLQQLCRGSTPKRRTTASSLALVTLHEESISRWADIHQDSIFPAYEGDRL) the chain is Cytoplasmic.

The protein belongs to the G-protein coupled receptor 1 family. Phosphorylation of Ser-329 and Ser-330 is a key step in agonist-dependent desensitization and loss of surface P2RY4. This phosphorylation does not involve PKC, nor other calcium-activated kinases. Expressed in the liver, intestine, stomach, bladder and lung.

The protein resides in the cell membrane. Receptor for ATP and UTP coupled to G-proteins that activate a phosphatidylinositol-calcium second messenger system. This Mus musculus (Mouse) protein is P2Y purinoceptor 4 (P2ry4).